Consider the following 459-residue polypeptide: Argininosuccinate lyase (459 aa).

Belongs to the lyase 1 family. Argininosuccinate lyase subfamily.

Its subcellular location is the cytoplasm. It carries out the reaction 2-(N(omega)-L-arginino)succinate = fumarate + L-arginine. It participates in amino-acid biosynthesis; L-arginine biosynthesis; L-arginine from L-ornithine and carbamoyl phosphate: step 3/3. The polypeptide is Argininosuccinate lyase (Sulfurihydrogenibium sp. (strain YO3AOP1)).